Consider the following 188-residue polypeptide: MFKGQKTLAALAVSLLFTAPVYAADEGSGEIHFKGEVIEAPCEIHPEDIDKNIDLGQVTTTHINREHHSNKVAVDIRLINCDLPASDNGSGMPVSKVGVTFDSTAKTTGATPLLSNTSAGEATGVGVRLMDKNDGNIVLGSAAPDLDLDASSSEQTLNFFAWMEQIDNAVDVTAGEVTANATYVLDYK.

An N-terminal signal peptide occupies residues 1 to 23 (MFKGQKTLAALAVSLLFTAPVYA). C42 and C81 are disulfide-bonded.

Belongs to the fimbrial protein family.

It is found in the fimbrium. This is an uncharacterized protein from Escherichia coli (strain K12).